The sequence spans 252 residues: Phosphatidylserine decarboxylase proenzyme (252 aa).

Ser-211 acts as the Schiff-base intermediate with substrate; via pyruvic acid in catalysis. Ser-211 carries the post-translational modification Pyruvic acid (Ser); by autocatalysis.

It belongs to the phosphatidylserine decarboxylase family. PSD-A subfamily. Heterodimer of a large membrane-associated beta subunit and a small pyruvoyl-containing alpha subunit. The cofactor is pyruvate. Post-translationally, is synthesized initially as an inactive proenzyme. Formation of the active enzyme involves a self-maturation process in which the active site pyruvoyl group is generated from an internal serine residue via an autocatalytic post-translational modification. Two non-identical subunits are generated from the proenzyme in this reaction, and the pyruvate is formed at the N-terminus of the alpha chain, which is derived from the carboxyl end of the proenzyme. The post-translation cleavage follows an unusual pathway, termed non-hydrolytic serinolysis, in which the side chain hydroxyl group of the serine supplies its oxygen atom to form the C-terminus of the beta chain, while the remainder of the serine residue undergoes an oxidative deamination to produce ammonia and the pyruvoyl prosthetic group on the alpha chain.

Its subcellular location is the cell membrane. It carries out the reaction a 1,2-diacyl-sn-glycero-3-phospho-L-serine + H(+) = a 1,2-diacyl-sn-glycero-3-phosphoethanolamine + CO2. The protein operates within phospholipid metabolism; phosphatidylethanolamine biosynthesis; phosphatidylethanolamine from CDP-diacylglycerol: step 2/2. Its function is as follows. Catalyzes the formation of phosphatidylethanolamine (PtdEtn) from phosphatidylserine (PtdSer). The chain is Phosphatidylserine decarboxylase proenzyme from Novosphingobium aromaticivorans (strain ATCC 700278 / DSM 12444 / CCUG 56034 / CIP 105152 / NBRC 16084 / F199).